Reading from the N-terminus, the 72-residue chain is Tetrahydromethanopterin S-methyltransferase subunit G (72 aa).

A helical membrane pass occupies residues 48-68 (IGILYGGFIGLLLFLIYTVVS).

This sequence belongs to the MtrG family. In terms of assembly, the complex is composed of 8 subunits; MtrA, MtrB, MtrC, MtrD, MtrE, MtrF, MtrG and MtrH.

The protein resides in the cell membrane. The catalysed reaction is 5-methyl-5,6,7,8-tetrahydromethanopterin + coenzyme M + 2 Na(+)(in) = 5,6,7,8-tetrahydromethanopterin + methyl-coenzyme M + 2 Na(+)(out). The protein operates within one-carbon metabolism; methanogenesis from CO(2); methyl-coenzyme M from 5,10-methylene-5,6,7,8-tetrahydromethanopterin: step 2/2. Functionally, part of a complex that catalyzes the formation of methyl-coenzyme M and tetrahydromethanopterin from coenzyme M and methyl-tetrahydromethanopterin. This is an energy-conserving, sodium-ion translocating step. This chain is Tetrahydromethanopterin S-methyltransferase subunit G, found in Methanosarcina barkeri (strain Fusaro / DSM 804).